A 134-amino-acid chain; its full sequence is Small ribosomal subunit protein uS8 (134 aa).

It belongs to the universal ribosomal protein uS8 family. In terms of assembly, part of the 30S ribosomal subunit. Contacts proteins S5 and S12.

Functionally, one of the primary rRNA binding proteins, it binds directly to 16S rRNA central domain where it helps coordinate assembly of the platform of the 30S subunit. The polypeptide is Small ribosomal subunit protein uS8 (Sphingopyxis alaskensis (strain DSM 13593 / LMG 18877 / RB2256) (Sphingomonas alaskensis)).